The chain runs to 378 residues: Cytochrome b (378 aa).

4 helical membrane-spanning segments follow: residues 34-54 (FGSLLGLCLIIQILTGLFLAM), 78-99 (WFLRICHANGASFFFACLFIHV), 114-134 (WMIGVIILFMVMATGFLGYVL), and 179-199 (FFTFHFILPFIVLALTMIHLL). 2 residues coordinate heme b: H84 and H98. Heme b-binding residues include H183 and H197. H202 is a binding site for a ubiquinone. The next 4 membrane-spanning stretches (helical) occupy residues 227 to 247 (YKDIVGFIIFMWILIGFIWKF), 289 to 309 (LGGVIALVLSIAILMILPFTH), 321 to 341 (LNQILFWNMVIVASLLTWIGA), and 348 to 368 (YVLTGQILTVLYFSYFIINPL).

The protein belongs to the cytochrome b family. As to quaternary structure, the main subunits of complex b-c1 are: cytochrome b, cytochrome c1 and the Rieske protein. Heme b serves as cofactor.

The protein resides in the mitochondrion inner membrane. Its function is as follows. Component of the ubiquinol-cytochrome c reductase complex (complex III or cytochrome b-c1 complex) that is part of the mitochondrial respiratory chain. The b-c1 complex mediates electron transfer from ubiquinol to cytochrome c. Contributes to the generation of a proton gradient across the mitochondrial membrane that is then used for ATP synthesis. The chain is Cytochrome b from Aedes aegypti (Yellowfever mosquito).